The following is a 305-amino-acid chain: Mitochondrial uncoupling protein 3 (305 aa).

3 Solcar repeats span residues 14–100 (TRIL…LKGL), 112–204 (LPLA…AKHF), and 213–299 (DNIF…FRLL). A run of 6 helical transmembrane segments spans residues 16 to 36 (ILLASLSAMVAESVTFPIDLT), 69 to 89 (VIGLYKGLSPAIIRHLFYTPI), 118 to 138 (ALVGGFSGVIAQVVASPADLV), 178 to 198 (KGVLPNIQRAFLVNMGELACY), 219 to 239 (TLASIMSGLASTSLSCPADVV), and 272 to 292 (WKGFFPTWARLGPWQFVFWVS).

The protein belongs to the mitochondrial carrier (TC 2.A.29) family.

The protein localises to the mitochondrion inner membrane. PUMPS are mitochondrial transporter proteins that create proton leaks across the inner mitochondrial membrane, thus uncoupling oxidative phosphorylation. This leads to a decrease in the efficiency of oxidative phosphorylation and an increase in heat production. May be involved in protecting plant cells against oxidative stress damage. The protein is Mitochondrial uncoupling protein 3 (PUMP3) of Arabidopsis thaliana (Mouse-ear cress).